We begin with the raw amino-acid sequence, 264 residues long: Probable membrane transporter protein HI_0902 (264 aa).

The next 9 helical transmembrane spans lie at Phe-4–Ile-24, Leu-28–Leu-48, Met-49–Gln-69, Ala-81–Gly-101, Ile-107–Ile-127, Ile-147–Phe-167, Ala-183–Gly-203, Tyr-210–Thr-230, and Val-243–Leu-263.

The protein belongs to the 4-toluene sulfonate uptake permease (TSUP) (TC 2.A.102) family.

Its subcellular location is the cell membrane. This is Probable membrane transporter protein HI_0902 from Haemophilus influenzae (strain ATCC 51907 / DSM 11121 / KW20 / Rd).